Here is a 79-residue protein sequence, read N- to C-terminus: MLGSKGLSPTDLRGMTDGHLRVELKNAKEEVFKLRFQSATGQLAHNARLRAVRRDIARIYTVMRERDIGIRSVQEEVSQ.

The protein belongs to the universal ribosomal protein uL29 family.

In Tropheryma whipplei (strain TW08/27) (Whipple's bacillus), this protein is Large ribosomal subunit protein uL29.